The following is a 155-amino-acid chain: Xanthine-guanine phosphoribosyltransferase (155 aa).

Residues 37–38, R69, and 90–98 each bind 5-phospho-alpha-D-ribose 1-diphosphate; these read RG and DDLVDTGGT. Residue R69 participates in GMP binding. Residue D91 participates in Mg(2+) binding. Guanine contacts are provided by D94 and I137. D94 and I137 together coordinate xanthine. GMP-binding positions include 94 to 98 and 136 to 137; these read DTGGT and WI.

The protein belongs to the purine/pyrimidine phosphoribosyltransferase family. XGPT subfamily. In terms of assembly, homotetramer. It depends on Mg(2+) as a cofactor.

The protein localises to the cell inner membrane. The catalysed reaction is GMP + diphosphate = guanine + 5-phospho-alpha-D-ribose 1-diphosphate. It catalyses the reaction XMP + diphosphate = xanthine + 5-phospho-alpha-D-ribose 1-diphosphate. It carries out the reaction IMP + diphosphate = hypoxanthine + 5-phospho-alpha-D-ribose 1-diphosphate. It participates in purine metabolism; GMP biosynthesis via salvage pathway; GMP from guanine: step 1/1. It functions in the pathway purine metabolism; XMP biosynthesis via salvage pathway; XMP from xanthine: step 1/1. Purine salvage pathway enzyme that catalyzes the transfer of the ribosyl-5-phosphate group from 5-phospho-alpha-D-ribose 1-diphosphate (PRPP) to the N9 position of the 6-oxopurines guanine and xanthine to form the corresponding ribonucleotides GMP (guanosine 5'-monophosphate) and XMP (xanthosine 5'-monophosphate), with the release of PPi. To a lesser extent, also acts on hypoxanthine. This is Xanthine-guanine phosphoribosyltransferase from Aeromonas salmonicida (strain A449).